Reading from the N-terminus, the 228-residue chain is PKHD-type hydroxylase xcc-b100_1388 (228 aa).

A Fe2OG dioxygenase domain is found at 78-180 (RIYPPLFNRY…RVASFFWIQS (103 aa)). Positions 96, 98, and 161 each coordinate Fe cation. Arg171 is a 2-oxoglutarate binding site.

Requires Fe(2+) as cofactor. L-ascorbate serves as cofactor.

The polypeptide is PKHD-type hydroxylase xcc-b100_1388 (Xanthomonas campestris pv. campestris (strain B100)).